Reading from the N-terminus, the 641-residue chain is Macrolide export ATP-binding/permease protein MacB (641 aa).

The ABC transporter domain maps to 2-240 (IKLENIKKSF…LKQNLKEIKP (239 aa)). An ATP-binding site is contributed by 38-45 (GQSGSGKS). The next 4 membrane-spanning stretches (helical) occupy residues 268 to 288 (FLTM…VALA), 516 to 536 (LLIS…VMNI), 565 to 585 (FLIE…GLAY), and 601 to 621 (IFST…GIVF).

It belongs to the ABC transporter superfamily. Macrolide exporter (TC 3.A.1.122) family. Homodimer.

The protein localises to the cell inner membrane. In terms of biological role, non-canonical ABC transporter that contains transmembrane domains (TMD), which form a pore in the inner membrane, and an ATP-binding domain (NBD), which is responsible for energy generation. Confers resistance against macrolides. This Campylobacter fetus subsp. fetus (strain 82-40) protein is Macrolide export ATP-binding/permease protein MacB.